The sequence spans 108 residues: DNA-directed RNA polymerase III subunit RPC10 (108 aa).

Zn(2+)-binding residues include Cys-5, Cys-8, Cys-25, Cys-28, Cys-69, and Cys-72. The C4-type zinc-finger motif lies at 5–28 (CPGCGNGLIVEEGQRCHRFACNTC). Residues 65 to 107 (TAEPCPKCEHPRAYFMQLQTRSADEPMTTFYKCCNAQCGHRWR) form a TFIIS-type zinc finger. The Hairpin signature appears at 88 to 89 (DE). Zn(2+) contacts are provided by Cys-98 and Cys-102.

Belongs to the archaeal RpoM/eukaryotic RPA12/RPB9/RPC11 RNA polymerase family. In terms of assembly, component of the RNA polymerase III complex consisting of 17 subunits: a ten-subunit horseshoe-shaped catalytic core composed of POLR3A/RPC1, POLR3B/RPC2, POLR1C/RPAC1, POLR1D/RPAC2, POLR3K/RPC10, POLR2E/RPABC1, POLR2F/RPABC2, POLR2H/RPABC3, POLR2K/RPABC4 and POLR2L/RPABC5; a mobile stalk composed of two subunits POLR3H/RPC8 and CRCP/RPC9, protruding from the core and functioning primarily in transcription initiation; and additional subunits homologous to general transcription factors of the RNA polymerase II machinery, POLR3C/RPC3-POLR3F/RPC6-POLR3G/RPC7 heterotrimer required for transcription initiation and POLR3D/RPC4-POLR3E/RPC5 heterodimer involved in both transcription initiation and termination.

Its subcellular location is the nucleus. Core component of RNA polymerase III (Pol III) which synthesizes small non-coding RNAs using the four ribonucleoside triphosphates as substrates. Can mediate Pol I proofreading of the nascent RNA transcript. Anchors into the Pol III active site to constantly monitor transcription fidelity, cleaves mis-incorporated 5'-ribonucleotides and restarts the transcription process. Once Pol III reaches the poly(dT) termination signal, can induce Pol III clamp opening and transcription termination. Pol III plays an important role in sensing and limiting infection by intracellular bacteria and DNA viruses. Acts as a nuclear and cytosolic DNA sensor involved in innate immune response. Can sense non-self dsDNA that serves as template for transcription into dsRNA. The non-self RNA polymerase III transcripts, such as Epstein-Barr virus-encoded RNAs (EBERs) induce type I interferon and NF-kappa-B through the RIG-I pathway. The protein is DNA-directed RNA polymerase III subunit RPC10 of Mus musculus (Mouse).